Consider the following 123-residue polypeptide: Large ribosomal subunit protein uL18 (123 aa).

It belongs to the universal ribosomal protein uL18 family. Part of the 50S ribosomal subunit; part of the 5S rRNA/L5/L18/L25 subcomplex. Contacts the 5S and 23S rRNAs.

Its function is as follows. This is one of the proteins that bind and probably mediate the attachment of the 5S RNA into the large ribosomal subunit, where it forms part of the central protuberance. In Wolbachia pipientis wMel, this protein is Large ribosomal subunit protein uL18.